The primary structure comprises 86 residues: Small ribosomal subunit protein bS20 (86 aa).

Belongs to the bacterial ribosomal protein bS20 family.

Binds directly to 16S ribosomal RNA. The sequence is that of Small ribosomal subunit protein bS20 from Novosphingobium aromaticivorans (strain ATCC 700278 / DSM 12444 / CCUG 56034 / CIP 105152 / NBRC 16084 / F199).